The sequence spans 84 residues: uncharacterized protein (84 aa).

Residues 1–21 (MYYRRQGEPQEMYGNGNNSVS) are disordered. Residues 49-69 (YIIYAIVAAILLLLFWLLYKK) traverse the membrane as a helical segment.

The protein localises to the membrane. This is an uncharacterized protein from Invertebrate iridescent virus 6 (IIV-6).